We begin with the raw amino-acid sequence, 1912 residues long: MVPVARPLSLLLTFFLCACAETPPRFTRTPVDQTGVSGGVASFICQATGDPRPKIVWNKKGKKVSNQRFEVIEFDDGSGSVLRIQPLRTPRDEAIYECVASNNVGEISVSTRLTVLREDQIPRGFPTIDMGPQLKVVERTRTATMLCAASGNPDPEITWFKDFLPVDTSNNNGRIKQLRSESIGGTPIRGALQIEQSEESDQGKYECVATNSAGTRYSAPANLYVRELREVRRVPPRFSIPPTNHEIMPGGSVNITCVAVGSPMPYVKWMLGAEDLTPEDDMPIGRNVLELNDVRQSANYTCVAMSTLGVIEAIAQITVKALPKPPGTPVVTESTATSITLTWDSGNPEPVSYYIIQHKPKNSEEPYKEIDGIATTRYSVAGLSPYSDYEFRVVAVNNIGRGPASEPVLTQTSEQAPSSAPRDVQARMLSSTTILVQWKEPEEPNGQIQGYRVYYTMDPTQHVNNWMKHNVADSQITTIGNLVPQKTYSVKVLAFTSIGDGPLSSDIQVITQTGVPGQPLNFKAEPESETSILLSWTPPRSDTIASYELVYRDGDQGEEQRITIEPGTSYRLQGLKPNSLYYFRLSARSPQGLGASTAEISARTMQSKPSAPPQDISCTSPSSTSILVSWQPPPVEKQNGIITEYSLKYAAVDGEDFKPHEILGIPSDTTKYLLEQLEKWTEYRITVTAHTDVGPGPESLSVLIRTDEDVPSGPPRKVEVEAVNATAVKVSWRSPVPNKQHGQIRGYQVHYVKMENGEPKGQPMLKDVMLADAQWEFDDTTEHDMIISGLQPETSYSLTVTAYTTKGDGARSKPKLVSTTGAVPGKPRLVINHTQMNTALIQWHPPVDTFGPLQGYRLKFGRKDMEPLTTLEFSEKEDHFTATDIHKGASYVFRLSARNKVGFGEEMVKEISVPEEIPTGFPQNLHSEGTTSTSVQLSWQPPVLAERNGVITKYTLLYRDINVPLLPMEHLIVPADTSMTLTGLKSDTTYDVKVRAHTSKGPGPYSPSVQFRTLPVDQVFAKNFHVKAVMKTSVLLSWEIPENYNSAMPFKILYDDGKMVEEVDGRATQKLIVNLKPEKSYSFVLTNRGNSAGGLQHRVTAKTAPDVLRTKPAFIGKTNLDGMITVQLPDVPANENIKGYYIIIVPLKKSRGKFIKPWESPDEMELDELLKEISRKRRSIRYGREVELKPYIAAHFDVLPTEFTLGDDKHYGGFTNKQLQSGQEYVFFVLAVMDHAESKMYATSPYSDPVVSMDLDPQPITDEEEGLIWVVGPVLAVVFIICIVIAILLYKRKRAESESRKSSLPNSKEVPSHHPTDPVELRRLNFQTPGMASHPPIPILELADHIERLKANDNLKFSQEYESIDPGQQFTWEHSNLEVNKPKNRYANVIAYDHSRVLLSAIEGIPGSDYVNANYIDGYRKQNAYIATQGSLPETFGDFWRMIWEQRSATVVMMTKLEERSRVKCDQYWPSRGTETHGLVQVTLLDTVELATYCVRTFALYKNGSSEKREVRQFQFTAWPDHGVPEHPTPFLAFLRRVKTCNPPDAGPMVVHCSAGVGRTGCFIVIDAMLERIKHEKTVDIYGHVTLMRAQRNYMVQTEDQYIFIHDALLEAVTCGNTEVPARNLYAYIQKLTQIETGENVTGMELEFKRLASSKAHTSRFISANLPCNKFKNRLVNIMPYESTRVCLQPIRGVEGSDYINASFLDGYRQQKAYIATQGPLAETTEDFWRMLWEHNSTIVVMLTKLREMGREKCHQYWPAERSARYQYFVVDPMAEYNMPQYILREFKVTDARDGQSRTVRQFQFTDWPEQGVPKSGEGFIDFIGQVHKTKEQFGQDGPISVHCSAGVGRTGVFITLSIVLERMRYEGVVDIFQTVKMLRTQRPAMVQTEDQYQFCYRAALEYLGSFDHYAT.

Residues 1–20 form the signal peptide; the sequence is MVPVARPLSLLLTFFLCACA. At 21–1266 the chain is on the extracellular side; that stretch reads ETPPRFTRTP…PQPITDEEEG (1246 aa). Ig-like C2-type domains follow at residues 24 to 114 and 126 to 224; these read PRFT…TRLT and PTID…ANLY. Intrachain disulfides connect Cys45/Cys98 and Cys147/Cys207. Positions 181–189 are mini-exon peptide A9; sufficient for interaction with IL1RAPL1; the sequence is ESIGGTPIR. Positions 227 to 230 are mini-exon peptide B; required for interaction with SLITRK2 and in the function in pre-synaptic differentiation; Acts as an adjustable linker to control relative positions and orientations of the PTPRD second and third immunoglobilin domains for their simultaneous interactions with the first immunoglobilin domain of IL1RAPL1 and IL1RAP; Modulates affinity for IL1RAPL1 and IL1RAP; it reads ELRE. One can recognise an Ig-like C2-type 3 domain in the interval 236 to 318; sequence PRFSIPPTNH…GVIEAIAQIT (83 aa). N-linked (GlcNAc...) asparagine glycans are attached at residues Asn254 and Asn299. Cys257 and Cys302 are joined by a disulfide. Fibronectin type-III domains lie at 325-415, 420-516, 518-607, 612-709, 714-822, 823-916, 921-1016, and 1020-1106; these read PPGT…TSEQ, APRD…TGVP, QPLN…TMQS, PPQD…TDED, PPRK…TTGA, VPGK…VPEE, FPQN…TLPV, and FAKN…TAPD. 2 N-linked (GlcNAc...) asparagine glycosylation sites follow: Asn724 and Asn832. The chain crosses the membrane as a helical span at residues 1267-1287; that stretch reads LIWVVGPVLAVVFIICIVIAI. At 1288-1912 the chain is on the cytoplasmic side; it reads LLYKRKRAES…YLGSFDHYAT (625 aa). The disordered stretch occupies residues 1298–1319; the sequence is ESRKSSLPNSKEVPSHHPTDPV. The segment covering 1310 to 1319 has biased composition (basic and acidic residues); that stretch reads VPSHHPTDPV. Tyrosine-protein phosphatase domains lie at 1357-1612 and 1644-1903; these read FSQE…LLEA and MELE…ALEY. Substrate is bound by residues Asp1521, 1553 to 1559, and Gln1597; that span reads CSAGVGR. The Phosphocysteine intermediate role is filled by Cys1553. Cys1844 serves as the catalytic Phosphocysteine intermediate.

It belongs to the protein-tyrosine phosphatase family. Receptor class 2A subfamily. As to quaternary structure, interacts with PPFIA1, PPFIA2 and PPFIA3. Interacts (via extracellular domain) with SLITRK4 (via LRR 1 and 2 repeats). Interacts with SLITRK2; induces presynaptic differentiation. Interacts (via the second immunoglobilin domain) with IL1RAPL1 (via the first immunoglobilin domain); induces pre- and postsynaptic differentiation of neurons and synapse formation. Isoform G, isoform H, isoform I, isoform J, and isoform K do not interact with IL1RAPL1. Interacts (via the third immunoglobilin domain) with IL1RAP (via the first immunoglobilin domain); induces pre- and postsynaptic differentiation of neurons. In terms of processing, a cleavage occurs, separating the extracellular domain from the transmembrane segment. This process called 'ectodomain shedding' is thought to be involved in receptor desensitization, signal transduction and/or membrane localization. Brain, kidney, heart, and some B-cell lines.

The protein localises to the membrane. The catalysed reaction is O-phospho-L-tyrosyl-[protein] + H2O = L-tyrosyl-[protein] + phosphate. Its function is as follows. Can bidirectionally induce pre- and post-synaptic differentiation of neurons by mediating interaction with IL1RAP and IL1RAPL1 trans-synaptically. Involved in pre-synaptic differentiation through interaction with SLITRK2. This is Receptor-type tyrosine-protein phosphatase delta (Ptprd) from Mus musculus (Mouse).